Reading from the N-terminus, the 1024-residue chain is Error-prone DNA polymerase (1024 aa).

The protein belongs to the DNA polymerase type-C family. DnaE2 subfamily.

The protein resides in the cytoplasm. It catalyses the reaction DNA(n) + a 2'-deoxyribonucleoside 5'-triphosphate = DNA(n+1) + diphosphate. Its function is as follows. DNA polymerase involved in damage-induced mutagenesis and translesion synthesis (TLS). It is not the major replicative DNA polymerase. In Vibrio vulnificus (strain CMCP6), this protein is Error-prone DNA polymerase.